Here is a 133-residue protein sequence, read N- to C-terminus: Putative nickel-responsive regulator (133 aa).

Ni(2+)-binding residues include H74, H85, H87, and C93.

The protein belongs to the transcriptional regulatory CopG/NikR family. Ni(2+) serves as cofactor.

Transcriptional regulator. This is Putative nickel-responsive regulator from Saccharolobus islandicus (strain Y.N.15.51 / Yellowstone #2) (Sulfolobus islandicus).